A 118-amino-acid polypeptide reads, in one-letter code: Basic phospholipase A2 PA-11 (118 aa).

7 disulfides stabilise this stretch: Cys-11–Cys-71, Cys-27–Cys-117, Cys-29–Cys-45, Cys-44–Cys-98, Cys-51–Cys-91, Cys-60–Cys-84, and Cys-78–Cys-89. Tyr-28, Gly-30, and Gly-32 together coordinate Ca(2+). The active site involves His-48. Asp-49 is a binding site for Ca(2+). The active site involves Asp-92.

This sequence belongs to the phospholipase A2 family. Group I subfamily. D49 sub-subfamily. Ca(2+) serves as cofactor. In terms of tissue distribution, expressed by the venom gland.

The protein resides in the secreted. It carries out the reaction a 1,2-diacyl-sn-glycero-3-phosphocholine + H2O = a 1-acyl-sn-glycero-3-phosphocholine + a fatty acid + H(+). Functionally, PLA2 catalyzes the calcium-dependent hydrolysis of the 2-acyl groups in 3-sn-phosphoglycerides. The chain is Basic phospholipase A2 PA-11 from Pseudechis australis (Mulga snake).